Here is a 512-residue protein sequence, read N- to C-terminus: Serine/threonine-protein kinase grp (512 aa).

The region spanning 22 to 279 is the Protein kinase domain; that stretch reads WTLAQTLGEG…LEKTLDHKWC (258 aa). ATP-binding positions include 28–36 and K51; that span reads LGEGAYGEV. Catalysis depends on D143, which acts as the Proton acceptor. The tract at residues 335–360 is disordered; the sequence is PTMRSDDDFNVRLGSGRSKEDGGDRQ.

Belongs to the protein kinase superfamily. CAMK Ser/Thr protein kinase family. NIM1 subfamily. In terms of processing, phosphorylated in a MEI-41/ATR dependent manner in response to DNA damage or the presence of unreplicated DNA.

The protein resides in the nucleus. It catalyses the reaction L-seryl-[protein] + ATP = O-phospho-L-seryl-[protein] + ADP + H(+). It carries out the reaction L-threonyl-[protein] + ATP = O-phospho-L-threonyl-[protein] + ADP + H(+). In terms of biological role, serine/threonine-protein kinase which is required for checkpoint-mediated cell cycle arrest and activation of DNA repair in response to the presence of DNA damage or unreplicated DNA. May also negatively regulate cell cycle progression during unperturbed cell cycles. May phosphorylate the CDC25 phosphatase stg, which promotes its degradation. This results in increased inhibitory tyrosine phosphorylation of Cdk1-cyclin complexes and consequent inhibition of cell cycle progression. This is Serine/threonine-protein kinase grp from Drosophila melanogaster (Fruit fly).